Reading from the N-terminus, the 722-residue chain is Polyribonucleotide nucleotidyltransferase (722 aa).

Mg(2+) contacts are provided by Asp-495 and Asp-501. One can recognise a KH domain in the interval 562–621; the sequence is PRLLSFRIDPELIGTVIGPGGRTIKGITERTNTKIDIEDGGIVTIASHDGVAAEEAQKII. The S1 motif domain occupies 631–699; that stretch reads GEIFTGSITR…NRGRINLTLR (69 aa). Over residues 701–711 the composition is skewed to polar residues; it reads VSQNNNDMNYP. Residues 701 to 722 are disordered; sequence VSQNNNDMNYPQPTPTPVAPLN. Positions 712 to 722 are enriched in pro residues; it reads QPTPTPVAPLN.

This sequence belongs to the polyribonucleotide nucleotidyltransferase family. The cofactor is Mg(2+).

Its subcellular location is the cytoplasm. It carries out the reaction RNA(n+1) + phosphate = RNA(n) + a ribonucleoside 5'-diphosphate. Its function is as follows. Involved in mRNA degradation. Catalyzes the phosphorolysis of single-stranded polyribonucleotides processively in the 3'- to 5'-direction. The polypeptide is Polyribonucleotide nucleotidyltransferase (Prochlorococcus marinus (strain MIT 9211)).